Reading from the N-terminus, the 111-residue chain is MNIGEAILFKYPTADPTKDFIVQNNGDGTPSYIAEWNIRAPIPTEAELKTWWEELQSTSAYEPPVQVDLLARELSQEKLARKQLEELNQTLGSELSKIKLQLLTLQGGQGS.

To B.subtilis XkdW.

This is an uncharacterized protein from Bacillus subtilis (strain 168).